The chain runs to 442 residues: MSEMTPREIVHELDRHIIGQADAKRAVAVALRNRWRRMQLGEEMRHEVTPKNILMIGPTGVGKTEIARRLAKLANAPFIKVEATKFTEVGYVGKEVDSIIRDLTDVAIKLVRETEMEKMKYRAEEAAEERILDALLPNPRNTWGEEEKADNSNTRQIFRKKLREGQLDDKEIELELSASPMGVEIMTPPGMEEMANQLQGLFQNLGQNQKKKRKIKVKEAMKALIEEEAARLVNPEELKQKAIAAVENNGIVFLDEIDKICKRGESSGPDVSREGVQRDLLPLVEGCTVNTKHGMVKTDHILFVASGAFQVARPSDLIPELQGRLPIRVELTALTTDDFERILTEPNASLTDQYKALMATEGVNIEFTKDGIRRLAEAAWQVNERTENIGARRLHTVMERLMEDISFDASEKSGETFVIDTDYVNAHLGKLIEDEDLSRFIL.

Residues I18, 60 to 65 (GVGKTE), D255, E320, and R392 each bind ATP.

It belongs to the ClpX chaperone family. HslU subfamily. As to quaternary structure, a double ring-shaped homohexamer of HslV is capped on each side by a ring-shaped HslU homohexamer. The assembly of the HslU/HslV complex is dependent on binding of ATP.

The protein resides in the cytoplasm. Its function is as follows. ATPase subunit of a proteasome-like degradation complex; this subunit has chaperone activity. The binding of ATP and its subsequent hydrolysis by HslU are essential for unfolding of protein substrates subsequently hydrolyzed by HslV. HslU recognizes the N-terminal part of its protein substrates and unfolds these before they are guided to HslV for hydrolysis. In Aeromonas salmonicida (strain A449), this protein is ATP-dependent protease ATPase subunit HslU.